The primary structure comprises 461 residues: Glutamate-gated chloride channel alpha (461 aa).

The first 20 residues, 1–20, serve as a signal peptide directing secretion; it reads MATWIVGKLIIASLILGIQA. The Extracellular portion of the chain corresponds to 21–275; sequence QQARTKSQDI…TTIQLKREFS (255 aa). L-glutamate contacts are provided by arginine 98, arginine 117, and serine 182. Residues cysteine 191 and cysteine 205 are joined by a disulfide bond. L-glutamate is bound at residue serine 211. An N-linked (GlcNAc...) asparagine glycan is attached at asparagine 246. Cysteines 252 and 263 form a disulfide. Residues 276–298 form a helical membrane-spanning segment; it reads FYLLQLYIPSCMLVIVSWVSFWF. At 299-303 the chain is on the cytoplasmic side; it reads DRTAI. Residues 304–325 form a helical membrane-spanning segment; sequence PARVTLGVTTLLTMTAQSAGIN. The Extracellular portion of the chain corresponds to 326–332; sequence SQLPPVS. The helical transmembrane segment at 333 to 353 threads the bilayer; sequence YIKAIDVWIGACMTFIFCALL. The Cytoplasmic segment spans residues 354–432; that stretch reads EFALVNHIAN…EWNDISKRVD (79 aa). The helical transmembrane segment at 433–454 threads the bilayer; that stretch reads LISRALFPVLFFVFNILYWSRF. Residues 455-461 lie on the Extracellular side of the membrane; it reads GQQNVLF.

This sequence belongs to the ligand-gated ion channel (TC 1.A.9) family. Glutamate-gated chloride channel (TC 1.A.9.4) subfamily. As to quaternary structure, pentamer. Homooligomer, forms functional heterooligomers with glc-2.

Its subcellular location is the postsynaptic cell membrane. It localises to the cell membrane. Functionally, glutamate-gated chloride channel subunit; channel properties depend on the subunit composition. Glutamate binding triggers a rapidly reversible current in heteromeric channels formed by glc-1 and glc-2, while the anti-helmintic drug ivermectin and other avermectins trigger a permanently open channel configuration. Channels containing only glc-1 are activated by ivermectin, but not by glutamate alone (in vitro). The heteromeric channel formed by glc-1 and glc-2 is also activated by ibotenate, and it is blocked by picrotoxin and flufenamic acid. Plays a role in the regulation of locomotor behavior. This Caenorhabditis elegans protein is Glutamate-gated chloride channel alpha.